Consider the following 180-residue polypeptide: CASP-like protein 2A3 (180 aa).

At 1 to 13 (MELIYGSTMRKKW) the chain is on the cytoplasmic side. Residues 14 to 34 (IEPALRFLPVGLCISALALML) form a helical membrane-spanning segment. Residues 35 to 55 (KSKEGNENGILEYKHVGAFRY) are Extracellular-facing. The helical transmembrane segment at 56–76 (LAYANGICAAYSVLSTFNSVV) threads the bilayer. Topologically, residues 77-85 (PRSCSLSRA) are cytoplasmic. Residues 86–106 (WFVFVFDQAFTYLMLGAGAVV) traverse the membrane as a helical segment. Over 107-135 (TEVLYLAYKGDEKITWFEICPYYGRFCNR) the chain is Extracellular. Residues 136–156 (VAASLVISFLALLCFIPLSLI) traverse the membrane as a helical segment. At 157-180 (SAYRVFSKYDPPSLCKKDQITSQS) the chain is on the cytoplasmic side.

Belongs to the Casparian strip membrane proteins (CASP) family. Homodimer and heterodimers.

It localises to the cell membrane. The chain is CASP-like protein 2A3 from Picea sitchensis (Sitka spruce).